A 217-amino-acid chain; its full sequence is MPETIENQACIVIAIAGASASGKSLIASTIYKELKEELDSNDIDIISEDAYYKDQTHLTMDEREQTNYDHPDSMVHYLLVEHLRQLKQGKPIQIPEYDYAKHNRKTSSKHFEPKKIIILEGILLLTHETIRNEINVSIFVDAPLDICFIRRLQRDLIERGRSMDSVISQCRKTVRPMFLKFIEPSKQYADIIIPKGGKNRIAIDILKAQIKQLLSKK.

Gly-17 to Ser-24 is a binding site for ATP.

Belongs to the uridine kinase family.

Its subcellular location is the cytoplasm. The catalysed reaction is uridine + ATP = UMP + ADP + H(+). The enzyme catalyses cytidine + ATP = CMP + ADP + H(+). The protein operates within pyrimidine metabolism; CTP biosynthesis via salvage pathway; CTP from cytidine: step 1/3. It participates in pyrimidine metabolism; UMP biosynthesis via salvage pathway; UMP from uridine: step 1/1. The chain is Uridine kinase from Haemophilus ducreyi (strain 35000HP / ATCC 700724).